Consider the following 422-residue polypeptide: Enolase (422 aa).

Q162 is a binding site for (2R)-2-phosphoglycerate. The active-site Proton donor is the E204. Positions 241, 284, and 311 each coordinate Mg(2+). (2R)-2-phosphoglycerate contacts are provided by K336, R365, S366, and K387. Catalysis depends on K336, which acts as the Proton acceptor.

This sequence belongs to the enolase family. The cofactor is Mg(2+).

It localises to the cytoplasm. The protein localises to the secreted. It is found in the cell surface. It catalyses the reaction (2R)-2-phosphoglycerate = phosphoenolpyruvate + H2O. Its pathway is carbohydrate degradation; glycolysis; pyruvate from D-glyceraldehyde 3-phosphate: step 4/5. Catalyzes the reversible conversion of 2-phosphoglycerate (2-PG) into phosphoenolpyruvate (PEP). It is essential for the degradation of carbohydrates via glycolysis. This is Enolase from Bartonella quintana (strain Toulouse) (Rochalimaea quintana).